Here is a 295-residue protein sequence, read N- to C-terminus: Cytidine deaminase (295 aa).

CMP/dCMP-type deaminase domains lie at 48–168 (EDAD…FGPA) and 187–295 (DDDE…YLSL). 89 to 91 (NME) is a binding site for substrate. Zn(2+) is bound at residue His102. Residue Glu104 is the Proton donor of the active site. The Zn(2+) site is built by Cys129 and Cys132.

It belongs to the cytidine and deoxycytidylate deaminase family. Homodimer. It depends on Zn(2+) as a cofactor.

It carries out the reaction cytidine + H2O + H(+) = uridine + NH4(+). The catalysed reaction is 2'-deoxycytidine + H2O + H(+) = 2'-deoxyuridine + NH4(+). This enzyme scavenges exogenous and endogenous cytidine and 2'-deoxycytidine for UMP synthesis. This Vibrio cholerae serotype O1 (strain ATCC 39315 / El Tor Inaba N16961) protein is Cytidine deaminase.